The chain runs to 416 residues: Putative gustatory receptor 57a (416 aa).

Over 1 to 13 (MAVLYFFREPETV) the chain is Cytoplasmic. Residues 14–34 (FDCAAFICILQFLMGCNGFGI) form a helical membrane-spanning segment. Residues 35–48 (RRSTFRISWASRIY) lie on the Extracellular side of the membrane. Residues 49–69 (SMSVAIAAFCCLFGSLSVLLA) form a helical membrane-spanning segment. Residues 70–83 (EEDIRERLAKADNL) lie on the Cytoplasmic side of the membrane. Residues 84-104 (VLSISALELLMSTLVFGVTVI) traverse the membrane as a helical segment. Residues 105-143 (SLQVFARRHLGIYQRLAALDARLMSDFGANLNYRKMLRK) lie on the Extracellular side of the membrane. The chain crosses the membrane as a helical span at residues 144–164 (NIAVLGIVTTIYLMAINSAAV). Residues 165-171 (QVASGHR) lie on the Cytoplasmic side of the membrane. A helical membrane pass occupies residues 172-192 (ALFLLFALCYTIVTGGPHFTG). Residues 193–295 (YVHMTLAEML…NEEENGSCYR (103 aa)) lie on the Extracellular side of the membrane. Asn-290 is a glycosylation site (N-linked (GlcNAc...) asparagine). Residues 296-316 (MLGYLALVMIPPLYKLLIAPF) traverse the membrane as a helical segment. Residues 317 to 374 (YCDRTIYEARRCLRLVEKLDDWFPQKSSLRPLVESLMSWRIQAKIQFTSGLDVVLSRK) are Cytoplasmic-facing. A helical membrane pass occupies residues 375 to 395 (VIGLFTSILVNYLLILIQFAM). At 396–416 (TQKMGEQIEQQKIALQEWIGF) the chain is on the extracellular side.

This sequence belongs to the insect chemoreceptor superfamily. Gustatory receptor (GR) family. Gr57a subfamily. As to expression, in larvae, is expressed in neurons of the terminal external chemosensory organ as well as in the dorsal pharyngeal sense organ.

Its subcellular location is the cell membrane. Its function is as follows. Probable gustatory receptor which mediates acceptance or avoidance behavior, depending on its substrates. The sequence is that of Putative gustatory receptor 57a (Gr57a) from Drosophila melanogaster (Fruit fly).